An 869-amino-acid polypeptide reads, in one-letter code: Synaptonemal complex protein ZEP1 (869 aa).

Coiled coils occupy residues 64–298 (TDLE…SGFT), 330–614 (HEEK…SERY), and 641–713 (RAYH…WKVM). Positions 841–869 (GSHPHPANIGELFSEGSLNPYAEDPYAFG) are disordered.

In terms of assembly, interacts with CRC1. In terms of tissue distribution, highly expressed in panicles.

It localises to the nucleus. It is found in the chromosome. Its function is as follows. Required for chromosome synapsis and regulates crossover frequency during meiosis. Acts as a transverse filament protein and constitutes the central element of the synaptonemal complex. In Oryza sativa subsp. japonica (Rice), this protein is Synaptonemal complex protein ZEP1 (ZEP1).